Consider the following 211-residue polypeptide: Beta-crystallin B3 (211 aa).

Residues 1-21 (MTEQQSPPEQMVTGEGAGERG) are disordered. The tract at residues 1 to 23 (MTEQQSPPEQMVTGEGAGERGGN) is N-terminal arm. 2 consecutive Beta/gamma crystallin 'Greek key' domains span residues 24–63 (YKITIYELENFQGRRCELSEELPNVVDKALEKVGSIQVES) and 64–108 (GPWL…RPLQ). The interval 109 to 113 (IDSPD) is connecting peptide. Beta/gamma crystallin 'Greek key' domains follow at residues 114–155 (HKIH…RALN) and 156–198 (GTWV…RRVR). The C-terminal arm stretch occupies residues 200–211 (QQWHQRGSFENS).

Belongs to the beta/gamma-crystallin family. Homo/heterodimer, or complexes of higher-order. The structure of beta-crystallin oligomers seems to be stabilized through interactions between the N-terminal arms.

Crystallins are the dominant structural components of the vertebrate eye lens. The chain is Beta-crystallin B3 (CRYBB3) from Gallus gallus (Chicken).